A 295-amino-acid chain; its full sequence is Pyridoxal 5'-phosphate synthase subunit PdxS (295 aa).

Asp25 contacts D-ribose 5-phosphate. The active-site Schiff-base intermediate with D-ribose 5-phosphate is the Lys82. Gly154 provides a ligand contact to D-ribose 5-phosphate. Residue Arg166 coordinates D-glyceraldehyde 3-phosphate. D-ribose 5-phosphate-binding positions include Gly215 and 236–237 (GS).

Belongs to the PdxS/SNZ family. As to quaternary structure, in the presence of PdxT, forms a dodecamer of heterodimers.

It carries out the reaction aldehydo-D-ribose 5-phosphate + D-glyceraldehyde 3-phosphate + L-glutamine = pyridoxal 5'-phosphate + L-glutamate + phosphate + 3 H2O + H(+). It functions in the pathway cofactor biosynthesis; pyridoxal 5'-phosphate biosynthesis. In terms of biological role, catalyzes the formation of pyridoxal 5'-phosphate from ribose 5-phosphate (RBP), glyceraldehyde 3-phosphate (G3P) and ammonia. The ammonia is provided by the PdxT subunit. Can also use ribulose 5-phosphate and dihydroxyacetone phosphate as substrates, resulting from enzyme-catalyzed isomerization of RBP and G3P, respectively. The protein is Pyridoxal 5'-phosphate synthase subunit PdxS of Actinobacillus pleuropneumoniae serotype 5b (strain L20).